The sequence spans 232 residues: Ribose-5-phosphate isomerase A (232 aa).

Substrate is bound by residues 28–31 (TGST), 83–86 (DGAD), and 96–99 (KGGG). Residue E105 is the Proton acceptor of the active site. Residue K123 participates in substrate binding.

It belongs to the ribose 5-phosphate isomerase family. In terms of assembly, homodimer.

It catalyses the reaction aldehydo-D-ribose 5-phosphate = D-ribulose 5-phosphate. It functions in the pathway carbohydrate degradation; pentose phosphate pathway; D-ribose 5-phosphate from D-ribulose 5-phosphate (non-oxidative stage): step 1/1. In terms of biological role, catalyzes the reversible conversion of ribose-5-phosphate to ribulose 5-phosphate. This Nitrobacter hamburgensis (strain DSM 10229 / NCIMB 13809 / X14) protein is Ribose-5-phosphate isomerase A.